The following is a 347-amino-acid chain: NADH-ubiquinone oxidoreductase chain 2 (347 aa).

The next 11 helical transmembrane spans lie at 5 to 22, 26 to 45, 60 to 80, 96 to 116, 122 to 142, 153 to 173, 178 to 198, 200 to 220, 237 to 257, 274 to 294, and 325 to 345; these read ILITITSTVVLGTMIVLF, WFMIWVGFEMNMLAIIPILM, FLTQATASMLLMLSIIINLLC, TMITIALTMKLGLSPFHFWVP, ISLSSGMILLTWQKIAPLSIL, LLLMMAITSMLVGGWGGLNQT, ILAYSSITHMGWMAAIMVYNP, LAILNLTIYIMMTLGTFMLFM, FPLMAPLILMLMLSLGGLPPL, DMIIMPTLMAITALLNLYFYT, and LLAPLIVTSTMLLPLTPMLAA.

The protein belongs to the complex I subunit 2 family. As to quaternary structure, core subunit of respiratory chain NADH dehydrogenase (Complex I) which is composed of 45 different subunits. Interacts with TMEM242.

The protein localises to the mitochondrion inner membrane. It catalyses the reaction a ubiquinone + NADH + 5 H(+)(in) = a ubiquinol + NAD(+) + 4 H(+)(out). Its function is as follows. Core subunit of the mitochondrial membrane respiratory chain NADH dehydrogenase (Complex I) which catalyzes electron transfer from NADH through the respiratory chain, using ubiquinone as an electron acceptor. Essential for the catalytic activity and assembly of complex I. The polypeptide is NADH-ubiquinone oxidoreductase chain 2 (Ailuropoda melanoleuca (Giant panda)).